We begin with the raw amino-acid sequence, 256 residues long: uncharacterized protein (256 aa).

This sequence to B.subtilis LplA.

This is an uncharacterized protein from Niallia circulans (Bacillus circulans).